We begin with the raw amino-acid sequence, 331 residues long: Hyaluronidase A (331 aa).

Intrachain disulfides connect Cys19/Cys308 and Cys185/Cys197. Asn79 and Asn99 each carry an N-linked (GlcNAc...) asparagine glycan. Glu109 serves as the catalytic Proton donor. Asn127 carries N-linked (GlcNAc...) asparagine glycosylation. N-linked (GlcNAc...) asparagine glycosylation occurs at Asn325.

The protein belongs to the glycosyl hydrolase 56 family. As to expression, expressed by the venom gland.

The protein resides in the secreted. It catalyses the reaction Random hydrolysis of (1-&gt;4)-linkages between N-acetyl-beta-D-glucosamine and D-glucuronate residues in hyaluronate.. Hydrolyzes high molecular weight hyaluronic acid to produce small oligosaccharides. This Vespula vulgaris (Yellow jacket) protein is Hyaluronidase A.